A 104-amino-acid chain; its full sequence is MFSTSDQVSKMNSRILSALLILGIATCVIAGGFCPKSRHPQCDLSYKINDCCAQSDCRVGSVCCVEGCGNVCRAESDTPLGEKFVDGSECKHGHVFPKKWYQFW.

The first 30 residues, 1–30 (MFSTSDQVSKMNSRILSALLILGIATCVIA), serve as a signal peptide directing secretion. Residues 31–76 (GGFCPKSRHPQCDLSYKINDCCAQSDCRVGSVCCVEGCGNVCRAES) enclose the WAP domain. Disulfide bonds link C34-C64, C42-C68, C51-C63, C52-C90, and C57-C72.

It belongs to the venom protein 11 family. 02 (wap-2) subfamily. Contains 5 disulfide bonds. In terms of tissue distribution, expressed by the venom gland.

It localises to the secreted. Has antibacterial activity. The sequence is that of U20-lycotoxin-Ls1c from Lycosa singoriensis (Wolf spider).